Here is a 144-residue protein sequence, read N- to C-terminus: Kunitz-type elastase inhibitor BrEI (144 aa).

N-linked (GlcNAc...) asparagine glycosylation occurs at Asn-38. Residues Cys-41 and Cys-88 are joined by a disulfide bond.

This sequence belongs to the leguminous Kunitz-type inhibitor family.

Its function is as follows. Inhibitor of porcine pancreatic elastase with a Ki of 27 nM. Does not inhibit human neutrophil elastase, bovine trypsin, human plasma kallikrein or porcine pancreatic kallikrein. The polypeptide is Kunitz-type elastase inhibitor BrEI (Bauhinia rufa (Orchid tree)).